Here is a 92-residue protein sequence, read N- to C-terminus: Large ribosomal subunit protein bL25 (92 aa).

This sequence belongs to the bacterial ribosomal protein bL25 family. Part of the 50S ribosomal subunit; part of the 5S rRNA/L5/L18/L25 subcomplex. Contacts the 5S rRNA. Binds to the 5S rRNA independently of L5 and L18.

Functionally, this is one of the proteins that binds to the 5S RNA in the ribosome where it forms part of the central protuberance. This chain is Large ribosomal subunit protein bL25, found in Vibrio cholerae serotype O1 (strain ATCC 39541 / Classical Ogawa 395 / O395).